The sequence spans 649 residues: Acetyl-coenzyme A synthetase (649 aa).

Residues 198–201 (RRGK), threonine 317, and asparagine 341 each bind CoA. ATP is bound by residues 393–395 (GEP), 417–422 (DTWWQT), aspartate 506, and arginine 521. Serine 529 contributes to the CoA binding site. Arginine 532 provides a ligand contact to ATP. Valine 543, histidine 545, and valine 548 together coordinate Mg(2+). Residue lysine 612 is modified to N6-acetyllysine. The disordered stretch occupies residues 625 to 649 (QPVQGDTSTLEDPTVLERLQASPAL).

Belongs to the ATP-dependent AMP-binding enzyme family. The cofactor is Mg(2+). In terms of processing, acetylated. Deacetylation by the SIR2-homolog deacetylase activates the enzyme.

The catalysed reaction is acetate + ATP + CoA = acetyl-CoA + AMP + diphosphate. Its function is as follows. Catalyzes the conversion of acetate into acetyl-CoA (AcCoA), an essential intermediate at the junction of anabolic and catabolic pathways. AcsA undergoes a two-step reaction. In the first half reaction, AcsA combines acetate with ATP to form acetyl-adenylate (AcAMP) intermediate. In the second half reaction, it can then transfer the acetyl group from AcAMP to the sulfhydryl group of CoA, forming the product AcCoA. This is Acetyl-coenzyme A synthetase from Deinococcus radiodurans (strain ATCC 13939 / DSM 20539 / JCM 16871 / CCUG 27074 / LMG 4051 / NBRC 15346 / NCIMB 9279 / VKM B-1422 / R1).